The sequence spans 159 residues: Growth arrest and DNA damage-inducible protein GADD45 gamma (159 aa).

The interval 43–86 (VYESAKVLNVDPDNVTFCVLAAGEEDEGDIALQIHFTLIQAFCC) is homodimerization.

It belongs to the GADD45 family. In terms of assembly, undergoes concentration-dependent homodimerization, which is required for growth inhibititory activity and enhances interaction with PCNA. Interacts with GADD45GIP1. Interacts with PCNA.

Its function is as follows. Involved in the regulation of growth and apoptosis. Mediates activation of stress-responsive MTK1/MEKK4 MAPKKK. The polypeptide is Growth arrest and DNA damage-inducible protein GADD45 gamma (GADD45G) (Homo sapiens (Human)).